We begin with the raw amino-acid sequence, 126 residues long: MNNCATFSMPHSNATNHTTLSHPVCNNNANCFTRSELYAIWSETINTLKRTFKIKNVHAHMLEDDSGEIKDYIRANLSRFTVITGKCSKRKVCHHDKRIARTLHLEKNLVDEYACSVTHVYSAPKW.

This sequence belongs to the baculoviridae LEF-11 family.

Involved in late/very late gene activation. This Epiphyas postvittana nucleopolyhedrovirus (EppoMNPV) protein is Late expression factor 11 (LEF-11).